We begin with the raw amino-acid sequence, 372 residues long: Queuine tRNA-ribosyltransferase (372 aa).

D90 acts as the Proton acceptor in catalysis. Residues D90–F94, D144, Q193, and G220 each bind substrate. An RNA binding region spans residues G251–D257. D270 (nucleophile) is an active-site residue. The segment at T275–R279 is RNA binding; important for wobble base 34 recognition. 4 residues coordinate Zn(2+): C308, C310, C313, and H339.

It belongs to the queuine tRNA-ribosyltransferase family. Homodimer. Within each dimer, one monomer is responsible for RNA recognition and catalysis, while the other monomer binds to the replacement base PreQ1. The cofactor is Zn(2+).

The catalysed reaction is 7-aminomethyl-7-carbaguanine + guanosine(34) in tRNA = 7-aminomethyl-7-carbaguanosine(34) in tRNA + guanine. It participates in tRNA modification; tRNA-queuosine biosynthesis. Functionally, catalyzes the base-exchange of a guanine (G) residue with the queuine precursor 7-aminomethyl-7-deazaguanine (PreQ1) at position 34 (anticodon wobble position) in tRNAs with GU(N) anticodons (tRNA-Asp, -Asn, -His and -Tyr). Catalysis occurs through a double-displacement mechanism. The nucleophile active site attacks the C1' of nucleotide 34 to detach the guanine base from the RNA, forming a covalent enzyme-RNA intermediate. The proton acceptor active site deprotonates the incoming PreQ1, allowing a nucleophilic attack on the C1' of the ribose to form the product. After dissociation, two additional enzymatic reactions on the tRNA convert PreQ1 to queuine (Q), resulting in the hypermodified nucleoside queuosine (7-(((4,5-cis-dihydroxy-2-cyclopenten-1-yl)amino)methyl)-7-deazaguanosine). This is Queuine tRNA-ribosyltransferase from Sulfurimonas denitrificans (strain ATCC 33889 / DSM 1251) (Thiomicrospira denitrificans (strain ATCC 33889 / DSM 1251)).